A 468-amino-acid chain; its full sequence is tRNA threonylcarbamoyladenosine dehydratase (468 aa).

The next 3 membrane-spanning stretches (helical) occupy residues 15–35 (FWIA…TLEF), 109–129 (NSFV…NMLA), and 315–335 (ILPV…TYVL).

It belongs to the HesA/MoeB/ThiF family.

The protein resides in the mitochondrion outer membrane. Functionally, catalyzes the ATP-dependent dehydration of threonylcarbamoyladenosine at position 37 (t(6)A37) to form cyclic t(6)A37 (ct(6)A37) in tRNAs that read codons beginning with adenine. The protein is tRNA threonylcarbamoyladenosine dehydratase (tcd1) of Schizosaccharomyces pombe (strain 972 / ATCC 24843) (Fission yeast).